A 256-amino-acid polypeptide reads, in one-letter code: Imidazole glycerol phosphate synthase subunit HisF (256 aa).

Active-site residues include Asp12 and Asp131.

It belongs to the HisA/HisF family. Heterodimer of HisH and HisF.

It localises to the cytoplasm. The enzyme catalyses 5-[(5-phospho-1-deoxy-D-ribulos-1-ylimino)methylamino]-1-(5-phospho-beta-D-ribosyl)imidazole-4-carboxamide + L-glutamine = D-erythro-1-(imidazol-4-yl)glycerol 3-phosphate + 5-amino-1-(5-phospho-beta-D-ribosyl)imidazole-4-carboxamide + L-glutamate + H(+). Its pathway is amino-acid biosynthesis; L-histidine biosynthesis; L-histidine from 5-phospho-alpha-D-ribose 1-diphosphate: step 5/9. Functionally, IGPS catalyzes the conversion of PRFAR and glutamine to IGP, AICAR and glutamate. The HisF subunit catalyzes the cyclization activity that produces IGP and AICAR from PRFAR using the ammonia provided by the HisH subunit. The chain is Imidazole glycerol phosphate synthase subunit HisF from Pseudomonas putida (strain ATCC 700007 / DSM 6899 / JCM 31910 / BCRC 17059 / LMG 24140 / F1).